The sequence spans 416 residues: Imidazolonepropionase (416 aa).

Histidine 81 and histidine 83 together coordinate Fe(3+). Residues histidine 81 and histidine 83 each coordinate Zn(2+). Arginine 90, tyrosine 153, and histidine 186 together coordinate 4-imidazolone-5-propanoate. Position 153 (tyrosine 153) interacts with N-formimidoyl-L-glutamate. Histidine 251 lines the Fe(3+) pocket. Residue histidine 251 participates in Zn(2+) binding. Glutamine 254 contributes to the 4-imidazolone-5-propanoate binding site. Residue aspartate 326 participates in Fe(3+) binding. Aspartate 326 contributes to the Zn(2+) binding site. Residues asparagine 328 and glycine 330 each coordinate N-formimidoyl-L-glutamate. Threonine 331 contributes to the 4-imidazolone-5-propanoate binding site.

Belongs to the metallo-dependent hydrolases superfamily. HutI family. Requires Zn(2+) as cofactor. Fe(3+) is required as a cofactor.

It localises to the cytoplasm. The catalysed reaction is 4-imidazolone-5-propanoate + H2O = N-formimidoyl-L-glutamate. Its pathway is amino-acid degradation; L-histidine degradation into L-glutamate; N-formimidoyl-L-glutamate from L-histidine: step 3/3. Its function is as follows. Catalyzes the hydrolytic cleavage of the carbon-nitrogen bond in imidazolone-5-propanoate to yield N-formimidoyl-L-glutamate. It is the third step in the universal histidine degradation pathway. In Paracidovorax citrulli (strain AAC00-1) (Acidovorax citrulli), this protein is Imidazolonepropionase.